The sequence spans 29 residues: Glucagon (29 aa).

Ser2 is modified (phosphoserine).

This sequence belongs to the glucagon family.

Its subcellular location is the secreted. Glucagon plays a key role in glucose metabolism and homeostasis. Regulates blood glucose by increasing gluconeogenesis and decreasing glycolysis. The sequence is that of Glucagon (GCG) from Chinchilla chinchilla (Short-tailed chinchilla).